A 475-amino-acid chain; its full sequence is Ribulose bisphosphate carboxylase large chain (475 aa).

Positions 1–2 (MS) are excised as a propeptide. Pro-3 is modified (N-acetylproline). The residue at position 14 (Lys-14) is an N6,N6,N6-trimethyllysine. Asn-123 and Thr-173 together coordinate substrate. The active-site Proton acceptor is the Lys-175. Lys-177 contacts substrate. Residues Lys-201, Asp-203, and Glu-204 each contribute to the Mg(2+) site. Lys-201 bears the N6-carboxylysine mark. Catalysis depends on His-294, which acts as the Proton acceptor. Substrate is bound by residues Arg-295, His-327, and Ser-379.

This sequence belongs to the RuBisCO large chain family. Type I subfamily. Heterohexadecamer of 8 large chains and 8 small chains; disulfide-linked. The disulfide link is formed within the large subunit homodimers. The cofactor is Mg(2+). Post-translationally, the disulfide bond which can form in the large chain dimeric partners within the hexadecamer appears to be associated with oxidative stress and protein turnover.

The protein resides in the plastid. Its subcellular location is the chloroplast. It catalyses the reaction 2 (2R)-3-phosphoglycerate + 2 H(+) = D-ribulose 1,5-bisphosphate + CO2 + H2O. The enzyme catalyses D-ribulose 1,5-bisphosphate + O2 = 2-phosphoglycolate + (2R)-3-phosphoglycerate + 2 H(+). Functionally, ruBisCO catalyzes two reactions: the carboxylation of D-ribulose 1,5-bisphosphate, the primary event in carbon dioxide fixation, as well as the oxidative fragmentation of the pentose substrate in the photorespiration process. Both reactions occur simultaneously and in competition at the same active site. The sequence is that of Ribulose bisphosphate carboxylase large chain from Castanea sativa (Sweet chestnut).